The primary structure comprises 98 residues: NADH-ubiquinone oxidoreductase chain 4L (98 aa).

The next 3 helical transmembrane spans lie at 1-21 (MSMV…GLLM), 29-49 (SLLC…VTIL), and 61-81 (IILL…LVMV).

Belongs to the complex I subunit 4L family. Core subunit of respiratory chain NADH dehydrogenase (Complex I) which is composed of 45 different subunits.

It localises to the mitochondrion inner membrane. The enzyme catalyses a ubiquinone + NADH + 5 H(+)(in) = a ubiquinol + NAD(+) + 4 H(+)(out). In terms of biological role, core subunit of the mitochondrial membrane respiratory chain NADH dehydrogenase (Complex I) which catalyzes electron transfer from NADH through the respiratory chain, using ubiquinone as an electron acceptor. Part of the enzyme membrane arm which is embedded in the lipid bilayer and involved in proton translocation. The sequence is that of NADH-ubiquinone oxidoreductase chain 4L (MT-ND4L) from Callorhinus ursinus (Northern fur seal).